A 194-amino-acid polypeptide reads, in one-letter code: Peptidyl-tRNA hydrolase (194 aa).

Tyr17 lines the tRNA pocket. Residue His22 is the Proton acceptor of the active site. TRNA is bound by residues Tyr68, Asn70, and Asn116.

This sequence belongs to the PTH family. Monomer.

It localises to the cytoplasm. The catalysed reaction is an N-acyl-L-alpha-aminoacyl-tRNA + H2O = an N-acyl-L-amino acid + a tRNA + H(+). In terms of biological role, hydrolyzes ribosome-free peptidyl-tRNAs (with 1 or more amino acids incorporated), which drop off the ribosome during protein synthesis, or as a result of ribosome stalling. Catalyzes the release of premature peptidyl moieties from peptidyl-tRNA molecules trapped in stalled 50S ribosomal subunits, and thus maintains levels of free tRNAs and 50S ribosomes. This is Peptidyl-tRNA hydrolase from Pseudomonas putida (strain ATCC 700007 / DSM 6899 / JCM 31910 / BCRC 17059 / LMG 24140 / F1).